Reading from the N-terminus, the 464-residue chain is UDP-N-acetylmuramate--L-alanine ligase (464 aa).

Position 112 to 118 (Gly112 to Thr118) interacts with ATP.

The protein belongs to the MurCDEF family.

The protein localises to the cytoplasm. The catalysed reaction is UDP-N-acetyl-alpha-D-muramate + L-alanine + ATP = UDP-N-acetyl-alpha-D-muramoyl-L-alanine + ADP + phosphate + H(+). The protein operates within cell wall biogenesis; peptidoglycan biosynthesis. In terms of biological role, cell wall formation. This chain is UDP-N-acetylmuramate--L-alanine ligase, found in Acidithiobacillus ferrooxidans (strain ATCC 23270 / DSM 14882 / CIP 104768 / NCIMB 8455) (Ferrobacillus ferrooxidans (strain ATCC 23270)).